We begin with the raw amino-acid sequence, 153 residues long: E3 ubiquitin-protein ligase AIRP1 (153 aa).

The segment at 104 to 145 adopts an RING-type; atypical zinc-finger fold; it reads CPICLEEYEIDNPKLLTKCGHDFHLACILAWMERSEACPVCD.

The protein localises to the cytoplasm. It is found in the cytosol. It catalyses the reaction S-ubiquitinyl-[E2 ubiquitin-conjugating enzyme]-L-cysteine + [acceptor protein]-L-lysine = [E2 ubiquitin-conjugating enzyme]-L-cysteine + N(6)-ubiquitinyl-[acceptor protein]-L-lysine.. Possesses E3 ubiquitin-protein ligase activity in vitro when associated with the E2 enzyme UBC8 in vitro. Plays combinatory roles with AIRP2 in the positive regulation of the abscisic acid-mediated drought stress response. This chain is E3 ubiquitin-protein ligase AIRP1, found in Arabidopsis thaliana (Mouse-ear cress).